Consider the following 223-residue polypeptide: Deoxyribose-phosphate aldolase (223 aa).

Aspartate 91 (proton donor/acceptor) is an active-site residue. Lysine 154 (schiff-base intermediate with acetaldehyde) is an active-site residue. The active-site Proton donor/acceptor is lysine 183.

This sequence belongs to the DeoC/FbaB aldolase family. DeoC type 1 subfamily.

It localises to the cytoplasm. The enzyme catalyses 2-deoxy-D-ribose 5-phosphate = D-glyceraldehyde 3-phosphate + acetaldehyde. It functions in the pathway carbohydrate degradation; 2-deoxy-D-ribose 1-phosphate degradation; D-glyceraldehyde 3-phosphate and acetaldehyde from 2-deoxy-alpha-D-ribose 1-phosphate: step 2/2. Functionally, catalyzes a reversible aldol reaction between acetaldehyde and D-glyceraldehyde 3-phosphate to generate 2-deoxy-D-ribose 5-phosphate. The protein is Deoxyribose-phosphate aldolase of Geobacillus kaustophilus (strain HTA426).